Consider the following 193-residue polypeptide: Peptidyl-tRNA hydrolase (193 aa).

Residue tyrosine 17 participates in tRNA binding. Histidine 22 (proton acceptor) is an active-site residue. Residues phenylalanine 68, asparagine 70, and asparagine 116 each contribute to the tRNA site.

It belongs to the PTH family. As to quaternary structure, monomer.

It localises to the cytoplasm. It carries out the reaction an N-acyl-L-alpha-aminoacyl-tRNA + H2O = an N-acyl-L-amino acid + a tRNA + H(+). Hydrolyzes ribosome-free peptidyl-tRNAs (with 1 or more amino acids incorporated), which drop off the ribosome during protein synthesis, or as a result of ribosome stalling. Its function is as follows. Catalyzes the release of premature peptidyl moieties from peptidyl-tRNA molecules trapped in stalled 50S ribosomal subunits, and thus maintains levels of free tRNAs and 50S ribosomes. The chain is Peptidyl-tRNA hydrolase from Acinetobacter baylyi (strain ATCC 33305 / BD413 / ADP1).